The sequence spans 919 residues: Phosphoenolpyruvate carboxylase (919 aa).

Catalysis depends on residues His138 and Lys579.

Belongs to the PEPCase type 1 family. Mg(2+) serves as cofactor.

It catalyses the reaction oxaloacetate + phosphate = phosphoenolpyruvate + hydrogencarbonate. In terms of biological role, forms oxaloacetate, a four-carbon dicarboxylic acid source for the tricarboxylic acid cycle. The chain is Phosphoenolpyruvate carboxylase (ppc) from Corynebacterium efficiens (strain DSM 44549 / YS-314 / AJ 12310 / JCM 11189 / NBRC 100395).